A 167-amino-acid chain; its full sequence is NAD(P)H-quinone oxidoreductase subunit I, chloroplastic (167 aa).

4Fe-4S ferredoxin-type domains lie at 55-84 and 95-124; these read GRIH…VDWK and LNYS…MTEE. 8 residues coordinate [4Fe-4S] cluster: Cys64, Cys67, Cys70, Cys74, Cys104, Cys107, Cys110, and Cys114.

Belongs to the complex I 23 kDa subunit family. In terms of assembly, NDH is composed of at least 16 different subunits, 5 of which are encoded in the nucleus. [4Fe-4S] cluster is required as a cofactor.

The protein resides in the plastid. Its subcellular location is the chloroplast thylakoid membrane. It catalyses the reaction a plastoquinone + NADH + (n+1) H(+)(in) = a plastoquinol + NAD(+) + n H(+)(out). The enzyme catalyses a plastoquinone + NADPH + (n+1) H(+)(in) = a plastoquinol + NADP(+) + n H(+)(out). Its function is as follows. NDH shuttles electrons from NAD(P)H:plastoquinone, via FMN and iron-sulfur (Fe-S) centers, to quinones in the photosynthetic chain and possibly in a chloroplast respiratory chain. The immediate electron acceptor for the enzyme in this species is believed to be plastoquinone. Couples the redox reaction to proton translocation, and thus conserves the redox energy in a proton gradient. The sequence is that of NAD(P)H-quinone oxidoreductase subunit I, chloroplastic from Morus indica (Mulberry).